Here is a 431-residue protein sequence, read N- to C-terminus: Glutamate--tRNA ligase 1 (431 aa).

Residues 6 to 16 (PSPTGDMHIGN) carry the 'HIGH' region motif. Residues 235-239 (KMSKR) carry the 'KMSKS' region motif. Lys238 contacts ATP.

The protein belongs to the class-I aminoacyl-tRNA synthetase family. Glutamate--tRNA ligase type 1 subfamily. In terms of assembly, monomer.

The protein resides in the cytoplasm. The enzyme catalyses tRNA(Glu) + L-glutamate + ATP = L-glutamyl-tRNA(Glu) + AMP + diphosphate. Its function is as follows. Catalyzes the attachment of glutamate to tRNA(Glu) in a two-step reaction: glutamate is first activated by ATP to form Glu-AMP and then transferred to the acceptor end of tRNA(Glu). The chain is Glutamate--tRNA ligase 1 from Campylobacter jejuni subsp. jejuni serotype O:23/36 (strain 81-176).